Consider the following 228-residue polypeptide: Ribonuclease 3 (228 aa).

Positions 8-130 constitute an RNase III domain; that stretch reads LKRLERRVDY…IIGAAFLDSD (123 aa). Residue E43 participates in Mg(2+) binding. Residue D47 is part of the active site. Residues D116 and E119 each contribute to the Mg(2+) site. E119 is an active-site residue. Positions 157-226 constitute a DRBM domain; the sequence is DPKTRLQEHL…ANKMLDSLSG (70 aa).

This sequence belongs to the ribonuclease III family. As to quaternary structure, homodimer. Requires Mg(2+) as cofactor.

The protein resides in the cytoplasm. It carries out the reaction Endonucleolytic cleavage to 5'-phosphomonoester.. Functionally, digests double-stranded RNA. Involved in the processing of primary rRNA transcript to yield the immediate precursors to the large and small rRNAs (23S and 16S). Processes some mRNAs, and tRNAs when they are encoded in the rRNA operon. Processes pre-crRNA and tracrRNA of type II CRISPR loci if present in the organism. The protein is Ribonuclease 3 of Psychromonas ingrahamii (strain DSM 17664 / CCUG 51855 / 37).